The primary structure comprises 310 residues: Small ribosomal subunit protein uS2 (310 aa).

Disordered regions lie at residues 213 to 240 (EEQA…GGAA) and 271 to 310 (WDSV…TDWA). The segment covering 216–227 (AALARQQEEANA) has biased composition (low complexity). Polar residues predominate over residues 297–310 (VTMQEQAKPSTDWA).

This sequence belongs to the universal ribosomal protein uS2 family. As to quaternary structure, component of the small ribosomal subunit. Mature ribosomes consist of a small (40S) and a large (60S) subunit. The 40S subunit contains about 33 different proteins and 1 molecule of RNA (18S). The 60S subunit contains about 49 different proteins and 3 molecules of RNA (28S, 5.8S and 5S). Interacts with ribosomal protein S21.

Its subcellular location is the cytoplasm. In terms of biological role, required for the assembly and/or stability of the 40S ribosomal subunit. Required for the processing of the 20S rRNA-precursor to mature 18S rRNA in a late step of the maturation of 40S ribosomal subunits. The sequence is that of Small ribosomal subunit protein uS2 from Nematostella vectensis (Starlet sea anemone).